The primary structure comprises 1073 residues: Transmembrane protein 132E (1073 aa).

The signal sequence occupies residues 1–33 (MGHFVVQGDLPWILCSLRLVIMIIAGKVSPTSS). The Extracellular segment spans residues 34–899 (DALFSVPVPS…MTDLEIGMYA (866 aa)). N102 is a glycosylation site (N-linked (GlcNAc...) asparagine). The disordered stretch occupies residues 246 to 270 (DPDSNDECGESYPRRGGPSRGESLS). Residues N324, N396, and N746 are each glycosylated (N-linked (GlcNAc...) asparagine). A helical membrane pass occupies residues 900 to 920 (LLGVFCLAILVFLINCIVFVL). Over 921–1073 (KYRHKRIPPE…DYMRRIKEIA (153 aa)) the chain is Cytoplasmic. Residues 952–970 (TQSDLSPQTVESPSNTLEG) show a composition bias toward polar residues. A disordered region spans residues 952-1024 (TQSDLSPQTV…PTSKRKRVKF (73 aa)). Low complexity predominate over residues 982–994 (SGSSQTSVQSQVH).

Belongs to the TMEM132 family.

The protein localises to the membrane. Required for normal inner ear hair cell function and hearing. This is Transmembrane protein 132E (tmem132e) from Danio rerio (Zebrafish).